We begin with the raw amino-acid sequence, 388 residues long: Lamin tail domain-containing protein 1 (388 aa).

Residues 136-254 (EVGQFTSSSL…QAIAWYTPIH (119 aa)) enclose the LTD domain. Residues 349–388 (EPHNTSTAGGRLDRQPRTRSTRPNRASGSKKKKTSESQKQ) are disordered. The span at 365–381 (RTRSTRPNRASGSKKKK) shows a compositional bias: basic residues.

Belongs to the intermediate filament family.

This Homo sapiens (Human) protein is Lamin tail domain-containing protein 1 (LMNTD1).